The following is a 166-amino-acid chain: Tetranectin-like protein (166 aa).

3 cysteine pairs are disulfide-bonded: C37–C47, C64–C160, and C136–C152. The 119-residue stretch at 43–161 (IHKKCYLASR…CRSEKRYICE (119 aa)) folds into the C-type lectin domain.

This chain is Tetranectin-like protein, found in Carcharhinus perezii (Reef shark).